Consider the following 754-residue polypeptide: Neprilysin-1 (754 aa).

Residues 5–27 (FGPPIVFLISCYALILCGTVDAL) traverse the membrane as a helical; Signal-anchor for type II membrane protein segment. Asn-38, Asn-81, Asn-132, Asn-217, Asn-273, Asn-303, and Asn-441 each carry an N-linked (GlcNAc...) asparagine glycan. A Peptidase M13 domain is found at 63-754 (VGDSEGYQEA…MNPTKRCVVW (692 aa)). Intrachain disulfides connect Cys-87-Cys-739, Cys-95-Cys-699, Cys-151-Cys-414, and Cys-624-Cys-751. Zn(2+) is bound at residue His-587. Glu-588 is a catalytic residue. A Zn(2+)-binding site is contributed by His-591. N-linked (GlcNAc...) asparagine glycosylation is present at Asn-612. Glu-649 contributes to the Zn(2+) binding site. The active-site Proton donor is the Asp-653.

This sequence belongs to the peptidase M13 family. Requires Zn(2+) as cofactor. As to expression, specifically expressed in pharyngeal cells and a single head neuron.

It is found in the membrane. Its function is as follows. Probable cell surface protease. Required to control the neuronal innervation of pharyngeal pumping. The polypeptide is Neprilysin-1 (nep-1) (Caenorhabditis elegans).